The primary structure comprises 196 residues: MQIITTTFIQKVILGSHQLHEQLSIVEARMIESAIVSMLTESFCENEQTLKYLARLLSPMSYMDVINARRGKKICGYPLCYKSAAENSSDGFFIHSMYCNNYHSKCSLYLMRQLSQTPLHERRGVHLTSYINLEFDDMYSVSLLEELVGSEVPIDTVKSLITSFKDLEFDDTYKNEPLPLDVYFGQLTTDEETCIE.

The RTR1-type zinc-finger motif lies at 52–123 (YLARLLSPMS…LSQTPLHERR (72 aa)). The Zn(2+) site is built by Cys-75, Cys-80, Cys-99, and His-103.

It belongs to the RPAP2 family.

The protein localises to the cytoplasm. It is found in the nucleus. The catalysed reaction is O-phospho-L-seryl-[protein] + H2O = L-seryl-[protein] + phosphate. It carries out the reaction O-phospho-L-threonyl-[protein] + H2O = L-threonyl-[protein] + phosphate. In terms of biological role, probable RNA polymerase II subunit B1 C-terminal domain (CTD) phosphatase that regulates RNA polymerase II transcription. May have functional redundancy with RTR1. This is RNA polymerase II subunit B1 CTD phosphatase RTR2 (RTR2) from Saccharomyces cerevisiae (strain ATCC 204508 / S288c) (Baker's yeast).